Reading from the N-terminus, the 208-residue chain is N-(5'-phosphoribosyl)anthranilate isomerase (208 aa).

It belongs to the TrpF family.

It carries out the reaction N-(5-phospho-beta-D-ribosyl)anthranilate = 1-(2-carboxyphenylamino)-1-deoxy-D-ribulose 5-phosphate. The protein operates within amino-acid biosynthesis; L-tryptophan biosynthesis; L-tryptophan from chorismate: step 3/5. This chain is N-(5'-phosphoribosyl)anthranilate isomerase, found in Deinococcus radiodurans (strain ATCC 13939 / DSM 20539 / JCM 16871 / CCUG 27074 / LMG 4051 / NBRC 15346 / NCIMB 9279 / VKM B-1422 / R1).